We begin with the raw amino-acid sequence, 687 residues long: Dictomallein (687 aa).

2 disordered regions span residues M1–L45 and T73–A112. Positions P233–A501 constitute a Peptidase M66 domain. H393 serves as a coordination point for Zn(2+). E394 is an active-site residue. Residues H397 and H403 each coordinate Zn(2+).

It belongs to the dictomallein family. The cofactor is Zn(2+).

The sequence is that of Dictomallein (dtmL) from Burkholderia pseudomallei (strain 668).